We begin with the raw amino-acid sequence, 155 residues long: Small ribosomal subunit protein uS7 (155 aa).

This sequence belongs to the universal ribosomal protein uS7 family. As to quaternary structure, part of the 30S ribosomal subunit. Contacts proteins S9 and S11.

One of the primary rRNA binding proteins, it binds directly to 16S rRNA where it nucleates assembly of the head domain of the 30S subunit. Is located at the subunit interface close to the decoding center, probably blocks exit of the E-site tRNA. The polypeptide is Small ribosomal subunit protein uS7 (Chlorobium chlorochromatii (strain CaD3)).